The primary structure comprises 894 residues: Coiled-coil domain-containing protein 39 (894 aa).

4 coiled-coil regions span residues 32-143, 187-411, 461-609, and 647-788; these read TENE…DQFK, ALER…LKKE, VRSE…ELKE, and KAAQ…KLRQ. The segment covering 844-857 has biased composition (low complexity); that stretch reads GSNPPSLGGSRPGS. The interval 844–894 is disordered; the sequence is GSNPPSLGGSRPGSARSQTSLGSVRSARSVASQQRGGMGGSPAVRTIQLGA.

The protein belongs to the CCDC39 family. In terms of assembly, interacts with CCDC40/FAP172. Phosphorylated in flagella.

It localises to the cell projection. The protein localises to the cilium. It is found in the flagellum. Its function is as follows. Required for assembly of dynein regulatory complex (DRC) and inner dynein arm complexes, which are responsible for ciliary beat regulation, by acting as a molecular ruler that determines the 96 nanometer (nm) repeat length and arrangements of components in cilia and flagella. Together with CCDC40/FAP172 forms a 96-nm-long complex in flagella. This complex does not act as a physical ruler, but rather act as a negative regulator for radial spokes: the complex lays along specific protofilaments, masking radial spoke binding sites and allowing recruitment of inner dynein arm (IDA) and nexin-dynein regulatory complexes (N-DRC). The protein is Coiled-coil domain-containing protein 39 (CCDC39) of Chlamydomonas reinhardtii (Chlamydomonas smithii).